A 274-amino-acid chain; its full sequence is Small ribosomal subunit protein uS3 (274 aa).

The region spanning 38–106 (IRRLLSSGLE…QVQLNILEVK (69 aa)) is the KH type-2 domain. Residues 215–274 (AAAAPAGADRPRRERPSGTRPRRSGASGTTATGTDAGRAAGGEEAAPDAAAPVEAQSTES) form a disordered region. Over residues 238 to 266 (SGASGTTATGTDAGRAAGGEEAAPDAAAP) the composition is skewed to low complexity.

This sequence belongs to the universal ribosomal protein uS3 family. In terms of assembly, part of the 30S ribosomal subunit. Forms a tight complex with proteins S10 and S14.

Binds the lower part of the 30S subunit head. Binds mRNA in the 70S ribosome, positioning it for translation. This Mycobacterium tuberculosis (strain ATCC 25177 / H37Ra) protein is Small ribosomal subunit protein uS3.